Reading from the N-terminus, the 170-residue chain is Lipoprotein signal peptidase (170 aa).

The next 3 membrane-spanning stretches (helical) occupy residues 5-25 (IVGVIAIVLVFALDQVSKAYA), 62-82 (SNLIFTYVSLGVILMLFVLFV), and 89-111 (STICMGVVIGGALGNLADRLRFG). Catalysis depends on residues D115 and D133. The chain crosses the membrane as a helical span at residues 126–146 (WPAFNFADVCVTCGVICFLCL).

Belongs to the peptidase A8 family.

The protein resides in the cell inner membrane. The catalysed reaction is Release of signal peptides from bacterial membrane prolipoproteins. Hydrolyzes -Xaa-Yaa-Zaa-|-(S,diacylglyceryl)Cys-, in which Xaa is hydrophobic (preferably Leu), and Yaa (Ala or Ser) and Zaa (Gly or Ala) have small, neutral side chains.. It functions in the pathway protein modification; lipoprotein biosynthesis (signal peptide cleavage). Its function is as follows. This protein specifically catalyzes the removal of signal peptides from prolipoproteins. The sequence is that of Lipoprotein signal peptidase from Anaplasma marginale (strain Florida).